Reading from the N-terminus, the 160-residue chain is Large ribosomal subunit protein uL16 (160 aa).

The interval Ile138–Lys160 is disordered. Positions Lys149–Lys160 are enriched in basic and acidic residues.

The protein belongs to the universal ribosomal protein uL16 family. As to quaternary structure, part of the 50S ribosomal subunit.

Its function is as follows. Binds 23S rRNA and is also seen to make contacts with the A and possibly P site tRNAs. This is Large ribosomal subunit protein uL16 from Prochlorococcus marinus subsp. pastoris (strain CCMP1986 / NIES-2087 / MED4).